A 37-amino-acid polypeptide reads, in one-letter code: Large ribosomal subunit protein bL36c (37 aa).

It belongs to the bacterial ribosomal protein bL36 family.

The protein localises to the plastid. Its subcellular location is the chloroplast. The polypeptide is Large ribosomal subunit protein bL36c (Huperzia lucidula (Shining clubmoss)).